The following is a 594-amino-acid chain: Type I restriction enzyme EcoEI specificity subunit (594 aa).

This sequence belongs to the type-I restriction system S methylase family. In terms of assembly, the type I restriction/modification system is composed of three polypeptides R, M and S; the restriction enzyme has stoichiometry R(2)M(2)S(1) while the methyltransferase is M(2)S(1).

The specificity (S) subunit of a type I restriction enzyme; this subunit dictates DNA sequence specificity. The M and S subunits together form a methyltransferase (MTase) that methylates two adenine residues of the sequence 5'-GAGN(7)ATGC-3'. In the presence of the R subunit the complex can also act as an endonuclease, binding to the same target sequence but cutting the DNA some distance from this site. Whether the DNA is cut or modified depends on the methylation state of the target sequence. When the target site is unmodified, the DNA is cut. When the target site is hemimethylated, the complex acts as a maintenance MTase modifying the DNA so that both strands become methylated. After locating a non-methylated recognition site, the enzyme complex serves as a molecular motor that translocates DNA in an ATP-dependent manner until a collision occurs that triggers cleavage. The chain is Type I restriction enzyme EcoEI specificity subunit from Escherichia coli.